The sequence spans 255 residues: Acetylglutamate kinase (255 aa).

Residues 40-41 (GG), R62, and N153 contribute to the substrate site.

It belongs to the acetylglutamate kinase family. ArgB subfamily.

The protein resides in the cytoplasm. The catalysed reaction is N-acetyl-L-glutamate + ATP = N-acetyl-L-glutamyl 5-phosphate + ADP. The protein operates within amino-acid biosynthesis; L-arginine biosynthesis; N(2)-acetyl-L-ornithine from L-glutamate: step 2/4. In terms of biological role, catalyzes the ATP-dependent phosphorylation of N-acetyl-L-glutamate. The chain is Acetylglutamate kinase from Bacillus cereus (strain B4264).